We begin with the raw amino-acid sequence, 360 residues long: Phospho-N-acetylmuramoyl-pentapeptide-transferase (360 aa).

10 helical membrane passes run 25-45 (RGIL…PWMI), 73-93 (TMGG…WADL), 97-117 (YVWV…VDDY), 132-152 (WKYF…YMTA), 168-188 (VSIP…VGSS), 199-219 (GLAI…CYLS), 236-256 (AGEL…FLWF), 263-283 (VFMG…IAVI), 288-308 (IVLF…VIQV), and 338-358 (VIVR…ATLK).

It belongs to the glycosyltransferase 4 family. MraY subfamily. Mg(2+) is required as a cofactor.

The protein resides in the cell inner membrane. The enzyme catalyses UDP-N-acetyl-alpha-D-muramoyl-L-alanyl-gamma-D-glutamyl-meso-2,6-diaminopimeloyl-D-alanyl-D-alanine + di-trans,octa-cis-undecaprenyl phosphate = di-trans,octa-cis-undecaprenyl diphospho-N-acetyl-alpha-D-muramoyl-L-alanyl-D-glutamyl-meso-2,6-diaminopimeloyl-D-alanyl-D-alanine + UMP. It functions in the pathway cell wall biogenesis; peptidoglycan biosynthesis. Its function is as follows. Catalyzes the initial step of the lipid cycle reactions in the biosynthesis of the cell wall peptidoglycan: transfers peptidoglycan precursor phospho-MurNAc-pentapeptide from UDP-MurNAc-pentapeptide onto the lipid carrier undecaprenyl phosphate, yielding undecaprenyl-pyrophosphoryl-MurNAc-pentapeptide, known as lipid I. The polypeptide is Phospho-N-acetylmuramoyl-pentapeptide-transferase (Pseudomonas fluorescens (strain ATCC BAA-477 / NRRL B-23932 / Pf-5)).